Consider the following 410-residue polypeptide: Multifunctional CCA protein (410 aa).

ATP-binding residues include Gly8 and Arg11. The CTP site is built by Gly8 and Arg11. Residues Asp21 and Asp23 each contribute to the Mg(2+) site. ATP is bound by residues Arg91, Arg137, and Arg140. CTP-binding residues include Arg91, Arg137, and Arg140. One can recognise an HD domain in the interval 228-329 (TGVHVLSVLQ…LELLQSFDVY (102 aa)).

This sequence belongs to the tRNA nucleotidyltransferase/poly(A) polymerase family. Bacterial CCA-adding enzyme type 1 subfamily. As to quaternary structure, monomer. Can also form homodimers and oligomers. Mg(2+) serves as cofactor. It depends on Ni(2+) as a cofactor.

It carries out the reaction a tRNA precursor + 2 CTP + ATP = a tRNA with a 3' CCA end + 3 diphosphate. The catalysed reaction is a tRNA with a 3' CCA end + 2 CTP + ATP = a tRNA with a 3' CCACCA end + 3 diphosphate. In terms of biological role, catalyzes the addition and repair of the essential 3'-terminal CCA sequence in tRNAs without using a nucleic acid template. Adds these three nucleotides in the order of C, C, and A to the tRNA nucleotide-73, using CTP and ATP as substrates and producing inorganic pyrophosphate. tRNA 3'-terminal CCA addition is required both for tRNA processing and repair. Also involved in tRNA surveillance by mediating tandem CCA addition to generate a CCACCA at the 3' terminus of unstable tRNAs. While stable tRNAs receive only 3'-terminal CCA, unstable tRNAs are marked with CCACCA and rapidly degraded. This chain is Multifunctional CCA protein, found in Pseudomonas paraeruginosa (strain DSM 24068 / PA7) (Pseudomonas aeruginosa (strain PA7)).